A 1706-amino-acid polypeptide reads, in one-letter code: Brefeldin A-inhibited guanine nucleotide-exchange protein 4 (1706 aa).

An SEC7 domain is found at 555-742 (MLEQRRAYKI…GSLYDRVVKE (188 aa)). Glu-657 is a catalytic residue.

As to quaternary structure, homodimer.

It localises to the cytoplasm. The protein resides in the cytosol. It is found in the membrane. Its activity is regulated as follows. Inhibited by brefeldin A. In terms of biological role, activates the ARF proteins by exchanging bound GDP for free GTP. Plays a role in vesicular protein sorting. In Arabidopsis thaliana (Mouse-ear cress), this protein is Brefeldin A-inhibited guanine nucleotide-exchange protein 4 (BIG4).